Reading from the N-terminus, the 260-residue chain is ProSAAS (260 aa).

The signal sequence occupies residues 1-33; the sequence is MAGSPLLCGPRAGGVGLLVLLLLGLLRLPPTLS. Residues 34 to 215 are proSAAS(1-180); the sequence is ARPVKEPRSL…SSEPEAAPAP (182 aa). Disordered stretches follow at residues 162 to 187 and 206 to 234; these read AALR…ADET and SSEP…PPEN. The tract at residues 221-260 is C-terminal inhibitory domain; interacts with PCSK1; sequence AVDQDLGPEVPPENVLGALLRVKRLENSSPQAPARRLLPP. The short motif at 239 to 244 is the Sufficient for inhibition of PCSK1 element; that stretch reads LLRVKR.

In terms of assembly, interacts via the C-terminal inhibitory domain with PCSK1 65 kDa form. Post-translationally, proteolytically cleaved in the Golgi. Big SAAS, Little SAAS, PEN and Big LEN are the major processed peptides in proSAAS-overexpressing PC-12 phaeochromocytoma cells (lacking PCSK1 and PCSK2 endopeptidases). Peptides corresponding to PEN and a proSAAS aa 40-59 have been detected in wild-type PC-12 cells. As to expression, expressed in adult brain (all major structural regions), adrenal gland (medulla) and spinal cord (dorsal and ventral horn). Expressed in pancreatic islands.

It is found in the secreted. The protein resides in the golgi apparatus. It localises to the trans-Golgi network. Its function is as follows. May function in the control of the neuroendocrine secretory pathway. Proposed be a specific endogenous inhibitor of PCSK1. ProSAAS and Big PEN-LEN, both containing the C-terminal inhibitory domain, but not the processed peptides reduce PCSK1 activity in the endoplasmic reticulum and Golgi. It reduces the activity of the 87 kDa form but not the autocatalytically derived 65 kDa form of PCSK1. Subsequent processing of proSAAS may eliminate the inhibition. Slows down convertase-mediated processing of proopiomelanocortin and proenkephalin. May control the intracellular timing of PCSK1 rather than its total level of activity. Functionally, endogenous ligand for GPR171. Neuropeptide involved in the regulation of feeding. In Rattus norvegicus (Rat), this protein is ProSAAS (Pcsk1n).